Consider the following 680-residue polypeptide: Dipeptidyl carboxypeptidase (680 aa).

His469 contributes to the Zn(2+) binding site. Residue Glu470 is part of the active site. Residues His473 and His476 each coordinate Zn(2+).

Belongs to the peptidase M3 family. It depends on Zn(2+) as a cofactor.

The protein localises to the cytoplasm. The enzyme catalyses Hydrolysis of unblocked, C-terminal dipeptides from oligopeptides, with broad specificity. Does not hydrolyze bonds in which P1' is Pro, or both P1 and P1' are Gly.. Functionally, removes dipeptides from the C-termini of N-blocked tripeptides, tetrapeptides and larger peptides. This chain is Dipeptidyl carboxypeptidase (dcp), found in Salmonella typhimurium (strain LT2 / SGSC1412 / ATCC 700720).